We begin with the raw amino-acid sequence, 816 residues long: H(+)/Cl(-) exchange transporter 5 (816 aa).

The interval 1-28 (MAMWQGAMDNRGFQQGSFNSFQSSSSDE) is disordered. Over 1-124 (MAMWQGAMDN…WALIHSVSDA (124 aa)) the chain is Cytoplasmic. Residues 12–25 (GFQQGSFNSFQSSS) show a composition bias toward low complexity. 2 helical membrane passes run 125–162 (FSGWLLMLLIGLLSGSLAGLIDISAHWMTDLKEGICTE) and 208–231 (VNYFMYVLWALLFAFLAVSLVKVF). The Selectivity filter part_1 motif lies at 237–241 (GSGIP). Serine 238 is a binding site for chloride. An intramembrane region (helical) is located at residues 240-247 (IPEIKTIL). 2 helical membrane-spanning segments follow: residues 256–275 (LGKWTLIIKTITLVLAVSSG) and 281–300 (EGPLVHVACCCGNILCHCFN). Residues 279-283 (GKEGP) carry the Selectivity filter part_2 motif. Intramembrane regions (helical) lie at residues 312–324 (VLSAAAAAGVSVA) and 328–336 (PIGGVLFSL). Transmembrane regions (helical) follow at residues 348–366 (LWRSFFAALVAAFTLRSIN), 389–414 (LVPFILLGIFGGLWGALFIRTNIAWC), 422–442 (LGKYPVIEVLVVTAITAILAF), 498–518 (MWQLALTLILKIVITIFTFGM), and 523–542 (GLFIPSMAVGAIAGRLLGVG). The short motif at 523 to 527 (GLFIP) is the Selectivity filter part_3 element. Phenylalanine 525 provides a ligand contact to chloride. An intramembrane region (helical) is located at residues 570–584 (GLYAMVGAAACLGGV). The note=Loop between two helices intramembrane region spans 585–587 (TRM). An intramembrane region (helical) is located at residues 588–599 (TVSLVVIMFELT). Residues 600–604 (GGLEY) constitute an intramembrane region (note=Loop between two helices). Residues 605–622 (IVPLMAAAMTSKWVADAL) traverse the membrane as a helical segment. Residues 623-816 (GREGIYDAHI…NQDPDSILFN (194 aa)) are Cytoplasmic-facing. Tyrosine 628 is a binding site for chloride. CBS domains lie at 656–720 (MKPR…ARKK) and 752–812 (ILDL…DPDS). ATP is bound by residues threonine 666, 687–689 (YSG), and 794–797 (TKKD).

The protein belongs to the chloride channel (TC 2.A.49) family. ClC-5/CLCN5 subfamily. Interacts with NEDD4 and NEDD4L. In terms of processing, ubiquitinated by NEDD4L in the presence of albumin; which promotes endocytosis and proteasomal degradation.

It localises to the golgi apparatus membrane. The protein resides in the endosome membrane. Its subcellular location is the cell membrane. It catalyses the reaction 2 chloride(in) + H(+)(out) = 2 chloride(out) + H(+)(in). Proton-coupled chloride transporter. Functions as antiport system and exchanges chloride ions against protons. Important for normal acidification of the endosome lumen. May play an important role in renal tubular function. The CLC channel family contains both chloride channels and proton-coupled anion transporters that exchange chloride or another anion for protons. The absence of conserved gating glutamate residues is typical for family members that function as channels. The protein is H(+)/Cl(-) exchange transporter 5 (CLCN5) of Sus scrofa (Pig).